A 550-amino-acid polypeptide reads, in one-letter code: Carboxypeptidase Y homolog A (550 aa).

The N-terminal stretch at 1-18 (MKSLVLGLLVGSAIASGP) is a signal peptide. The propeptide occupies 19–131 (LQHVLHAPPD…KLSQYDLRIK (113 aa)). The disordered stretch occupies residues 20-39 (QHVLHAPPDPEPKPEPEPQV). 5 cysteine pairs are disulfide-bonded: C185–C424, C319–C333, C343–C366, C350–C359, and C388–C394. N-linked (GlcNAc...) asparagine glycosylation is found at N203 and N216. S272 is a catalytic residue. The N-linked (GlcNAc...) asparagine glycan is linked to N289. N387 carries an N-linked (GlcNAc...) asparagine glycan. Residue D463 is part of the active site. Residues N493 and N514 are each glycosylated (N-linked (GlcNAc...) asparagine). Residue H525 is part of the active site.

Belongs to the peptidase S10 family.

It localises to the vacuole. It carries out the reaction Release of a C-terminal amino acid with broad specificity.. Vacuolar carboxypeptidase involved in degradation of small peptides. Digests preferentially peptides containing an aliphatic or hydrophobic residue in P1' position, as well as methionine, leucine or phenylalanine in P1 position of ester substrate. This Paracoccidioides brasiliensis (strain Pb18) protein is Carboxypeptidase Y homolog A (CPYA).